The following is a 246-amino-acid chain: Phosphomannomutase 2 (246 aa).

Alanine 2 bears the N-acetylalanine mark. Aspartate 12 acts as the Nucleophile in catalysis. Mg(2+)-binding residues include aspartate 12 and aspartate 14. Catalysis depends on aspartate 14, which acts as the Proton donor/acceptor. Residues arginine 21, arginine 123, arginine 134, and arginine 141 each coordinate alpha-D-mannose 1-phosphate. At lysine 149 the chain carries N6-acetyllysine. Alpha-D-mannose 1-phosphate is bound by residues serine 179 and aspartate 181. Positions 209, 221, 223, and 226 each coordinate Mg(2+).

The protein belongs to the eukaryotic PMM family. In terms of assembly, homodimer.

Its subcellular location is the cytoplasm. It catalyses the reaction alpha-D-mannose 1-phosphate = D-mannose 6-phosphate. It participates in nucleotide-sugar biosynthesis; GDP-alpha-D-mannose biosynthesis; alpha-D-mannose 1-phosphate from D-fructose 6-phosphate: step 2/2. Involved in the synthesis of the GDP-mannose and dolichol-phosphate-mannose required for a number of critical mannosyl transfer reactions. The protein is Phosphomannomutase 2 (PMM2) of Homo sapiens (Human).